The sequence spans 278 residues: MSSASFTTKALSVLAALTAASAPLVAASPAHALANARNVTGSSTTSDSIVRLHIGNTACTGTMITPTWAITARHCIPEDGIAGAAIGSSTLSQFQQVSQAILHPTADLALVELPNQASSNTVDLYGAHVQPGENGQAAGWGGYSAFGQNVAQQADVQIQRRVVNVPSPDRTAVLLEGTVSNGRLVPGDSGGPLYINGQLAGVLSMSTDVENDALDGTVGWYIPVAEHAEWIAYYTGKHIAPIAGAPAELVDATANPTFIPAPQPFTGSSIGGWALGSS.

Residues 1 to 32 form the signal peptide; sequence MSSASFTTKALSVLAALTAASAPLVAASPAHA. Positions 33–236 constitute a Peptidase S1 domain; it reads LANARNVTGS…HAEWIAYYTG (204 aa). C59 and C75 are oxidised to a cystine. Catalysis depends on charge relay system residues H74, D123, and S189.

This sequence belongs to the peptidase S1 family.

The protein resides in the secreted. This is an uncharacterized protein from Corynebacterium glutamicum (strain R).